We begin with the raw amino-acid sequence, 273 residues long: Undecaprenyl-diphosphatase (273 aa).

The next 7 membrane-spanning stretches (helical) occupy residues 4-24 (LILLKALLLGIVEGLTEFLPI), 43-63 (KAKVFTVAIQLGAILAVCWEY), 82-102 (FVINLFIAFLPAAILGLLFIK), 108-128 (LFHPMPVAIALVTGGILILWA), 183-203 (AAEFSFFLAIPVMFAATFYDV), 217-237 (MFATGSVAAFISALIAIRGFI), and 248-268 (FAWYRIGFGLIVLLTAYSGLV).

It belongs to the UppP family.

It localises to the cell inner membrane. The catalysed reaction is di-trans,octa-cis-undecaprenyl diphosphate + H2O = di-trans,octa-cis-undecaprenyl phosphate + phosphate + H(+). Catalyzes the dephosphorylation of undecaprenyl diphosphate (UPP). Confers resistance to bacitracin. The polypeptide is Undecaprenyl-diphosphatase (Nitrosomonas europaea (strain ATCC 19718 / CIP 103999 / KCTC 2705 / NBRC 14298)).